A 213-amino-acid polypeptide reads, in one-letter code: Putative glutathione-dependent formaldehyde-activating enzyme (213 aa).

One can recognise a CENP-V/GFA domain in the interval 19-165 (FPGGTLKCLC…FRELGLETYD (147 aa)). The Zn(2+) site is built by Cys-26, Cys-28, Cys-47, Cys-49, Cys-52, Cys-94, and Cys-97.

It belongs to the Gfa family. Zn(2+) is required as a cofactor.

It catalyses the reaction S-(hydroxymethyl)glutathione = glutathione + formaldehyde. Its pathway is one-carbon metabolism; formaldehyde degradation; formate from formaldehyde (glutathione route): step 1/3. Catalyzes the condensation of formaldehyde and glutathione to S-hydroxymethylglutathione. This is Putative glutathione-dependent formaldehyde-activating enzyme from Podospora anserina (strain S / ATCC MYA-4624 / DSM 980 / FGSC 10383) (Pleurage anserina).